Here is a 502-residue protein sequence, read N- to C-terminus: Probable glycine dehydrogenase (decarboxylating) subunit 2 (502 aa).

At lysine 273 the chain carries N6-(pyridoxal phosphate)lysine.

This sequence belongs to the GcvP family. C-terminal subunit subfamily. In terms of assembly, the glycine cleavage system is composed of four proteins: P, T, L and H. In this organism, the P 'protein' is a heterodimer of two subunits. Requires pyridoxal 5'-phosphate as cofactor.

The catalysed reaction is N(6)-[(R)-lipoyl]-L-lysyl-[glycine-cleavage complex H protein] + glycine + H(+) = N(6)-[(R)-S(8)-aminomethyldihydrolipoyl]-L-lysyl-[glycine-cleavage complex H protein] + CO2. In terms of biological role, the glycine cleavage system catalyzes the degradation of glycine. The P protein binds the alpha-amino group of glycine through its pyridoxal phosphate cofactor; CO(2) is released and the remaining methylamine moiety is then transferred to the lipoamide cofactor of the H protein. This Pyrococcus furiosus (strain ATCC 43587 / DSM 3638 / JCM 8422 / Vc1) protein is Probable glycine dehydrogenase (decarboxylating) subunit 2.